The following is a 36-amino-acid chain: Glycine-rich protein GWK (36 aa).

The disordered stretch occupies residues 1–36; sequence YKRGGGGWGGGGGWKGGGGGGGGWKGGGGGGKGGGG.

In terms of biological role, possesses antifungal activity against a number of phytopathogenic fungi, including H.sativum and F.culmorum. The sequence is that of Glycine-rich protein GWK from Cucumis melo (Muskmelon).